Here is a 123-residue protein sequence, read N- to C-terminus: Immunoglobulin lambda variable 9-49 (123 aa).

The signal sequence occupies residues 1-19 (MAWAPLLLTLLSLLTGSLS). Positions 20 to 44 (QPVLTQPPSASASLGASVTLTCTLS) are framework-1. The Ig-like domain occupies 21–123 (PVLTQPPSAS…ADHGSGSNFV (103 aa)). A disulfide bridge connects residues cysteine 41 and cysteine 112. The complementarity-determining-1 stretch occupies residues 45–51 (SGYSNYK). The interval 52 to 68 (VDWYQQRPGKGPRFVMR) is framework-2. A complementarity-determining-2 region spans residues 69–76 (VGTGGIVG). A framework-3 region spans residues 77 to 112 (SKGDGIPDRFSVLGSGLNRYLTIKNIQEEDESDYHC). Position 96 is a phosphotyrosine (tyrosine 96). At threonine 98 the chain carries Phosphothreonine. The interval 113–123 (GADHGSGSNFV) is complementarity-determining-3.

As to quaternary structure, immunoglobulins are composed of two identical heavy chains and two identical light chains; disulfide-linked.

It is found in the secreted. The protein localises to the cell membrane. Its function is as follows. V region of the variable domain of immunoglobulin light chains that participates in the antigen recognition. Immunoglobulins, also known as antibodies, are membrane-bound or secreted glycoproteins produced by B lymphocytes. In the recognition phase of humoral immunity, the membrane-bound immunoglobulins serve as receptors which, upon binding of a specific antigen, trigger the clonal expansion and differentiation of B lymphocytes into immunoglobulins-secreting plasma cells. Secreted immunoglobulins mediate the effector phase of humoral immunity, which results in the elimination of bound antigens. The antigen binding site is formed by the variable domain of one heavy chain, together with that of its associated light chain. Thus, each immunoglobulin has two antigen binding sites with remarkable affinity for a particular antigen. The variable domains are assembled by a process called V-(D)-J rearrangement and can then be subjected to somatic hypermutations which, after exposure to antigen and selection, allow affinity maturation for a particular antigen. This chain is Immunoglobulin lambda variable 9-49, found in Homo sapiens (Human).